A 224-amino-acid chain; its full sequence is UPF0758 protein HEAR2468 (224 aa).

An MPN domain is found at 102–224; sequence ALNSPQAVKQ…VYSFAEQGQL (123 aa). Residues histidine 173, histidine 175, and aspartate 186 each coordinate Zn(2+). Positions 173–186 match the JAMM motif motif; it reads HNHPSGTPEPSAAD.

The protein belongs to the UPF0758 family.

In Herminiimonas arsenicoxydans, this protein is UPF0758 protein HEAR2468.